A 188-amino-acid chain; its full sequence is Phosphoribosylglycinamide formyltransferase (188 aa).

Glycine 12–asparagine 14 serves as a coordination point for N(1)-(5-phospho-beta-D-ribosyl)glycinamide. Residues lysine 66, methionine 91–isoleucine 94, and asparagine 108 contribute to the (6R)-10-formyltetrahydrofolate site. Histidine 110 acts as the Proton donor in catalysis.

Belongs to the GART family.

The enzyme catalyses N(1)-(5-phospho-beta-D-ribosyl)glycinamide + (6R)-10-formyltetrahydrofolate = N(2)-formyl-N(1)-(5-phospho-beta-D-ribosyl)glycinamide + (6S)-5,6,7,8-tetrahydrofolate + H(+). The protein operates within purine metabolism; IMP biosynthesis via de novo pathway; N(2)-formyl-N(1)-(5-phospho-D-ribosyl)glycinamide from N(1)-(5-phospho-D-ribosyl)glycinamide (10-formyl THF route): step 1/1. Catalyzes the transfer of a formyl group from 10-formyltetrahydrofolate to 5-phospho-ribosyl-glycinamide (GAR), producing 5-phospho-ribosyl-N-formylglycinamide (FGAR) and tetrahydrofolate. The chain is Phosphoribosylglycinamide formyltransferase from Staphylococcus aureus (strain MRSA252).